A 104-amino-acid chain; its full sequence is NADH-quinone oxidoreductase subunit K (104 aa).

A run of 3 helical transmembrane segments spans residues 4–24 (VPAS…LFGA), 31–51 (VIVL…LVAF), and 67–87 (LFTM…LIAL).

Belongs to the complex I subunit 4L family. In terms of assembly, NDH-1 is composed of 14 different subunits. Subunits NuoA, H, J, K, L, M, N constitute the membrane sector of the complex.

The protein localises to the cell membrane. It catalyses the reaction a quinone + NADH + 5 H(+)(in) = a quinol + NAD(+) + 4 H(+)(out). Functionally, NDH-1 shuttles electrons from NADH, via FMN and iron-sulfur (Fe-S) centers, to quinones in the respiratory chain. The immediate electron acceptor for the enzyme in this species is believed to be a menaquinone. Couples the redox reaction to proton translocation (for every two electrons transferred, four hydrogen ions are translocated across the cytoplasmic membrane), and thus conserves the redox energy in a proton gradient. In Bacillus cytotoxicus (strain DSM 22905 / CIP 110041 / 391-98 / NVH 391-98), this protein is NADH-quinone oxidoreductase subunit K.